A 441-amino-acid polypeptide reads, in one-letter code: Endothelin receptor type B (441 aa).

Residues methionine 1–alanine 26 form the signal peptide. At glutamate 27–lysine 100 the chain is on the extracellular side. The disordered stretch occupies residues glutamate 30–proline 87. Over residues proline 41–threonine 53 the composition is skewed to low complexity. Residues serine 54–proline 70 show a composition bias toward polar residues. Residues tyrosine 101–isoleucine 125 form a helical membrane-spanning segment. Residues tyrosine 126 to asparagine 136 are Cytoplasmic-facing. The chain crosses the membrane as a helical span at residues isoleucine 137–leucine 162. The Extracellular segment spans residues alanine 163–lysine 174. An intrachain disulfide couples cysteine 173 to cysteine 254. Residues leucine 175–isoleucine 196 form a helical membrane-spanning segment. Over aspartate 197–threonine 217 the chain is Cytoplasmic. Residues alanine 218–isoleucine 242 form a helical membrane-spanning segment. Over threonine 243–threonine 270 the chain is Extracellular. A helical membrane pass occupies residues alanine 271 to methionine 295. Residues threonine 296–threonine 323 lie on the Cytoplasmic side of the membrane. Serine 304 carries the post-translational modification Phosphoserine. The helical transmembrane segment at valine 324–tyrosine 349 threads the bilayer. Residues aspartate 350–serine 361 lie on the Extracellular side of the membrane. Residues phenylalanine 362–valine 388 form a helical membrane-spanning segment. Topologically, residues serine 389–serine 441 are cytoplasmic. 2 S-palmitoyl cysteine lipidation sites follow: cysteine 402 and cysteine 404. Serine 418, serine 434, and serine 435 each carry phosphoserine. The residue at position 438 (tyrosine 438) is a Phosphotyrosine. A phosphoserine mark is found at serine 439, serine 440, and serine 441.

Belongs to the G-protein coupled receptor 1 family. Endothelin receptor subfamily. EDNRB sub-subfamily. In terms of processing, it is not sure whether phosphorylation is on Ser-434 or Ser-435.

Its subcellular location is the cell membrane. In terms of biological role, non-specific receptor for endothelin 1, 2, and 3. Mediates its action by association with G proteins that activate a phosphatidylinositol-calcium second messenger system. This chain is Endothelin receptor type B (EDNRB), found in Bos taurus (Bovine).